A 203-amino-acid polypeptide reads, in one-letter code: Urease accessory protein UreG (203 aa).

A GTP-binding site is contributed by 11–18; sequence GPVGSGKT.

It belongs to the SIMIBI class G3E GTPase family. UreG subfamily. Homodimer. UreD, UreF and UreG form a complex that acts as a GTP-hydrolysis-dependent molecular chaperone, activating the urease apoprotein by helping to assemble the nickel containing metallocenter of UreC. The UreE protein probably delivers the nickel.

It localises to the cytoplasm. Its function is as follows. Facilitates the functional incorporation of the urease nickel metallocenter. This process requires GTP hydrolysis, probably effectuated by UreG. This is Urease accessory protein UreG from Prochlorococcus marinus (strain MIT 9301).